A 212-amino-acid polypeptide reads, in one-letter code: Small ribosomal subunit protein eS1 (212 aa).

This sequence belongs to the eukaryotic ribosomal protein eS1 family.

This Haloquadratum walsbyi (strain DSM 16790 / HBSQ001) protein is Small ribosomal subunit protein eS1.